The primary structure comprises 300 residues: Enoyl-CoA hydratase domain-containing protein 3, mitochondrial (300 aa).

Residues 1 to 66 constitute a mitochondrion transit peptide; it reads MAVVAGLRAF…RNIVLSNPRR (66 aa). The tract at residues 34–53 is disordered; the sequence is GSAGPAGSESEPRLTSTRQQ. Lys-110 is modified (N6-succinyllysine).

Belongs to the enoyl-CoA hydratase/isomerase family.

Its subcellular location is the mitochondrion. In terms of biological role, may play a role in fatty acid biosynthesis and insulin sensitivity. The polypeptide is Enoyl-CoA hydratase domain-containing protein 3, mitochondrial (Mus musculus (Mouse)).